A 303-amino-acid polypeptide reads, in one-letter code: Cytochrome c oxidase subunit 2 (303 aa).

The N-terminal stretch at 1–25 (MRHSTTLTGCATGAAGLLAATAAAA) is a signal peptide. A run of 2 helical transmembrane segments spans residues 60–80 (FILV…LYAV) and 104–124 (WTIV…PVLF). Cu cation is bound by residues His217, Cys252, Cys256, and His260.

Belongs to the cytochrome c oxidase subunit 2 family. Cu cation serves as cofactor.

The protein resides in the cell membrane. It catalyses the reaction 4 Fe(II)-[cytochrome c] + O2 + 8 H(+)(in) = 4 Fe(III)-[cytochrome c] + 2 H2O + 4 H(+)(out). In terms of biological role, subunits I and II form the functional core of the enzyme complex. Electrons originating in cytochrome c are transferred via heme a and Cu(A) to the binuclear center formed by heme a3 and Cu(B). In Cereibacter sphaeroides (Rhodobacter sphaeroides), this protein is Cytochrome c oxidase subunit 2 (ctaC).